We begin with the raw amino-acid sequence, 657 residues long: KNR4/SMI1 homolog (657 aa).

3 disordered regions span residues E168 to Y193, S366 to S402, and L416 to L657. The segment covering K174–A187 has biased composition (polar residues). Residues L416–T436 show a composition bias toward polar residues. Low complexity-rich tracts occupy residues S444 to A455 and T473 to P482. Residues L492–R504 are compositionally biased toward basic and acidic residues. Over residues A505–T521 the composition is skewed to polar residues. Composition is skewed to basic and acidic residues over residues K535–E561, V569–V604, and K627–E650.

The protein belongs to the KNR4/SMI1 family.

This is KNR4/SMI1 homolog from Eremothecium gossypii (strain ATCC 10895 / CBS 109.51 / FGSC 9923 / NRRL Y-1056) (Yeast).